The sequence spans 396 residues: G-protein coupled receptor 84 (396 aa).

The Extracellular portion of the chain corresponds to methionine 1–tyrosine 21. Asparagine 3 and asparagine 8 each carry an N-linked (GlcNAc...) asparagine glycan. Residues phenylalanine 22 to leucine 42 form a helical membrane-spanning segment. The Cytoplasmic segment spans residues leucine 43–leucine 57. The helical transmembrane segment at leucine 58–valine 78 threads the bilayer. The Extracellular segment spans residues aspartate 79–arginine 94. The helical transmembrane segment at isoleucine 95–alanine 115 threads the bilayer. Residues leucine 116 to lysine 135 lie on the Cytoplasmic side of the membrane. A helical transmembrane segment spans residues glycine 136 to tryptophan 156. Residues asparagine 157–threonine 180 lie on the Extracellular side of the membrane. Residues isoleucine 181–isoleucine 201 form a helical membrane-spanning segment. The Cytoplasmic portion of the chain corresponds to histidine 202–methionine 320. 2 positions are modified to phosphoserine: serine 221 and serine 224. Residues leucine 241–alanine 310 form a disordered region. The span at glycine 253–glycine 269 shows a compositional bias: polar residues. 2 positions are modified to phosphothreonine: threonine 263 and threonine 264. Residues serine 290–threonine 308 show a composition bias toward basic and acidic residues. A helical membrane pass occupies residues cysteine 321–leucine 341. Residues aspartate 342 to histidine 352 are Extracellular-facing. A helical membrane pass occupies residues methionine 353 to methionine 373. At asparagine 374–histidine 396 the chain is on the cytoplasmic side.

This sequence belongs to the G-protein coupled receptor 1 family. Interacts with ARRB2 and ARR3. In terms of processing, phosphorylated by a subset of GPR84-activating ligands. Constitutively phosphorylated at Ser-221 and Ser-224 in the absence of 2-HTP. By contrast, Thr-263 and Thr-264 are phosphorylated only following prior cell treatment with 2-HTP. As to expression, expressed predominantly in hematopoietic tissues. Expressed mainly in the bone marrow with transcripts also detected in spleen, the lymph node, liver and the lung.

The protein localises to the cell membrane. Functionally, g protein-coupled receptor that responds endogenously to dietary fatty acids or nutrient, specifically medium-chain free fatty acid (FFA) with carbon chain lengths of C9 to C14. Capric acid (C10:0), undecanoic acid (C11:0) and lauric acid (C12:0) are the most potent agonists. In immune cells, functions as a pro-inflammatory receptor via 6-OAU and promotes the expression of pro-inflammatory mediators such as TNFalpha, IL-6 and IL-12B as well as stimulating chemotactic responses through activation of signaling mediators AKT, ERK and NF-kappa-B (by sim). In addition, triggers increased bacterial adhesion and phagocytosis in macrophages and regulates pro-inflammatory function via enhancing NLRP3 inflammasome activation. Also plays an important role in inflammation by modulating neutrophil functions. Mechanistically, promotes neutrophil chemotaxis, reactive oxygen species (ROS) production and degranulation via LYN-AKT/ERK pathway. To regulate ROS production, communicates with the two formyl peptide receptors FPR2 and FPR1 to control the NADPH oxidase activity in neutrophils. The polypeptide is G-protein coupled receptor 84 (Gpr84) (Mus musculus (Mouse)).